The primary structure comprises 344 residues: Aspartate carbamoyltransferase catalytic subunit (344 aa).

Positions 1-30 are disordered; sequence MPESPPLPKRSPLMTSSTTRPASDYPPGGD. Residues R88 and T89 each coordinate carbamoyl phosphate. K116 contributes to the L-aspartate binding site. Residues R138, H166, and Q169 each coordinate carbamoyl phosphate. L-aspartate-binding residues include R199 and R253. Positions 294 and 295 each coordinate carbamoyl phosphate.

The protein belongs to the aspartate/ornithine carbamoyltransferase superfamily. ATCase family. Heterododecamer (2C3:3R2) of six catalytic PyrB chains organized as two trimers (C3), and six regulatory PyrI chains organized as three dimers (R2).

It carries out the reaction carbamoyl phosphate + L-aspartate = N-carbamoyl-L-aspartate + phosphate + H(+). It functions in the pathway pyrimidine metabolism; UMP biosynthesis via de novo pathway; (S)-dihydroorotate from bicarbonate: step 2/3. In terms of biological role, catalyzes the condensation of carbamoyl phosphate and aspartate to form carbamoyl aspartate and inorganic phosphate, the committed step in the de novo pyrimidine nucleotide biosynthesis pathway. The polypeptide is Aspartate carbamoyltransferase catalytic subunit (Sphingopyxis alaskensis (strain DSM 13593 / LMG 18877 / RB2256) (Sphingomonas alaskensis)).